A 61-amino-acid polypeptide reads, in one-letter code: Large ribosomal subunit protein uL30 (61 aa).

It belongs to the universal ribosomal protein uL30 family. Part of the 50S ribosomal subunit.

The protein is Large ribosomal subunit protein uL30 of Corynebacterium jeikeium (strain K411).